Reading from the N-terminus, the 228-residue chain is Urease accessory protein UreF (228 aa).

This sequence belongs to the UreF family. In terms of assembly, ureD, UreF and UreG form a complex that acts as a GTP-hydrolysis-dependent molecular chaperone, activating the urease apoprotein by helping to assemble the nickel containing metallocenter of UreC. The UreE protein probably delivers the nickel.

Its subcellular location is the cytoplasm. Required for maturation of urease via the functional incorporation of the urease nickel metallocenter. The chain is Urease accessory protein UreF from Prochlorococcus marinus subsp. pastoris (strain CCMP1986 / NIES-2087 / MED4).